Reading from the N-terminus, the 270-residue chain is MALANNLTAILNLLALLCSIPITASGIWLASKPDNECVNLLRWPVVVLGVLILVVSATGFIGAYKYKETLLAVYLCCMAILIGLLLVVLIFAFVVTRPDGSYRVPGRGYKEYRLEGFSNWLKENVVDSKNWGRLRACLADTNVCPKLNQEFITADQFFSSSKITPLQSGCCKPPTACGYNFVNPTLWLNPTNMAADADCYLWSNDQSQLCYNCNSCKAGLLGNLRKEWRKANLILIITVVVLIWVYVIACSAFRNAQTEDLFRKYKQGWV.

Residues 1–8 (MALANNLT) lie on the Cytoplasmic side of the membrane. A helical transmembrane segment spans residues 9-29 (AILNLLALLCSIPITASGIWL). The Extracellular segment spans residues 30–42 (ASKPDNECVNLLR). A helical membrane pass occupies residues 43–63 (WPVVVLGVLILVVSATGFIGA). The Cytoplasmic portion of the chain corresponds to 64–74 (YKYKETLLAVY). A helical transmembrane segment spans residues 75-95 (LCCMAILIGLLLVVLIFAFVV). The Extracellular portion of the chain corresponds to 96 to 232 (TRPDGSYRVP…NLRKEWRKAN (137 aa)). The helical transmembrane segment at 233–253 (LILIITVVVLIWVYVIACSAF) threads the bilayer. Over 254–270 (RNAQTEDLFRKYKQGWV) the chain is Cytoplasmic.

Belongs to the tetraspanin (TM4SF) family.

It localises to the membrane. May be involved in the regulation of cell differentiation. This Arabidopsis thaliana (Mouse-ear cress) protein is Tetraspanin-2 (TET2).